Reading from the N-terminus, the 382-residue chain is L-lysine 4-hydroxylase (382 aa).

Fe cation is bound by residues histidine 182, glutamate 184, and histidine 318.

Belongs to the clavaminate synthase family. Requires Fe(2+) as cofactor.

It catalyses the reaction L-lysine + 2-oxoglutarate + O2 = (4R)-4-hydroxy-L-lysine + succinate + CO2. Its function is as follows. Alpha-ketoglutarate-dependent dioxygenase that in vitro catalyzes the regio- and stereoselective hydroxylation of L-lysine, leading to (4R)-4-hydroxy-L-lysine. Cannot use D-lysine or L-ornithine as substrate. The chain is L-lysine 4-hydroxylase from Chitinophaga pinensis (strain ATCC 43595 / DSM 2588 / LMG 13176 / NBRC 15968 / NCIMB 11800 / UQM 2034).